The chain runs to 257 residues: Urease accessory protein UreD 3 (257 aa).

The tract at residues 1–22 is disordered; sequence MSVRATARLRAEPDGRDGTALP.

It belongs to the UreD family. As to quaternary structure, ureD, UreF and UreG form a complex that acts as a GTP-hydrolysis-dependent molecular chaperone, activating the urease apoprotein by helping to assemble the nickel containing metallocenter of UreC. The UreE protein probably delivers the nickel.

Its subcellular location is the cytoplasm. Its function is as follows. Required for maturation of urease via the functional incorporation of the urease nickel metallocenter. This chain is Urease accessory protein UreD 3, found in Streptomyces griseus subsp. griseus (strain JCM 4626 / CBS 651.72 / NBRC 13350 / KCC S-0626 / ISP 5235).